The primary structure comprises 681 residues: DNA-directed RNA polymerase subunit beta' (681 aa).

Cys-69, Cys-71, Cys-87, and Cys-90 together coordinate Zn(2+). The Mg(2+) site is built by Asp-489, Asp-491, and Asp-493.

It belongs to the RNA polymerase beta' chain family. RpoC1 subfamily. In terms of assembly, in plastids the minimal PEP RNA polymerase catalytic core is composed of four subunits: alpha, beta, beta', and beta''. When a (nuclear-encoded) sigma factor is associated with the core the holoenzyme is formed, which can initiate transcription. It depends on Mg(2+) as a cofactor. Zn(2+) is required as a cofactor.

The protein localises to the plastid. It is found in the chloroplast. The catalysed reaction is RNA(n) + a ribonucleoside 5'-triphosphate = RNA(n+1) + diphosphate. DNA-dependent RNA polymerase catalyzes the transcription of DNA into RNA using the four ribonucleoside triphosphates as substrates. This Nicotiana sylvestris (Wood tobacco) protein is DNA-directed RNA polymerase subunit beta'.